Reading from the N-terminus, the 256-residue chain is Type III pantothenate kinase (256 aa).

An ATP-binding site is contributed by 7-14 (DVGNTRLK). Residues tyrosine 96 and 103 to 106 (GADR) contribute to the substrate site. The active-site Proton acceptor is the aspartate 105. Threonine 133 contributes to the ATP binding site. Threonine 183 contributes to the substrate binding site.

Belongs to the type III pantothenate kinase family. As to quaternary structure, homodimer. Requires NH4(+) as cofactor. K(+) serves as cofactor.

The protein localises to the cytoplasm. The catalysed reaction is (R)-pantothenate + ATP = (R)-4'-phosphopantothenate + ADP + H(+). It functions in the pathway cofactor biosynthesis; coenzyme A biosynthesis; CoA from (R)-pantothenate: step 1/5. Functionally, catalyzes the phosphorylation of pantothenate (Pan), the first step in CoA biosynthesis. This is Type III pantothenate kinase from Verminephrobacter eiseniae (strain EF01-2).